An 804-amino-acid polypeptide reads, in one-letter code: Phenylalanine--tRNA ligase beta subunit (804 aa).

The tRNA-binding domain occupies 39–155; sequence AEGLKKIVVG…ADVKPGEEVY (117 aa). The region spanning 408-483 is the B5 domain; it reads RNPSVVKTTV…RIYGYDNLKS (76 aa). Asp461, Asp467, Glu470, and Glu471 together coordinate Mg(2+). Positions 711–804 constitute an FDX-ACB domain; that stretch reads PKFPAIERDL…LKESLKIKVR (94 aa).

The protein belongs to the phenylalanyl-tRNA synthetase beta subunit family. Type 1 subfamily. Tetramer of two alpha and two beta subunits. Mg(2+) serves as cofactor.

The protein localises to the cytoplasm. The enzyme catalyses tRNA(Phe) + L-phenylalanine + ATP = L-phenylalanyl-tRNA(Phe) + AMP + diphosphate + H(+). The protein is Phenylalanine--tRNA ligase beta subunit of Lactobacillus johnsonii (strain CNCM I-12250 / La1 / NCC 533).